Consider the following 433-residue polypeptide: tRNA-2-methylthio-N(6)-dimethylallyladenosine synthase (433 aa).

The MTTase N-terminal domain occupies 4–119 (KKLFIQTLGC…ITQAIKTPKF (116 aa)). Cysteine 13, cysteine 50, cysteine 82, cysteine 151, cysteine 155, and cysteine 158 together coordinate [4Fe-4S] cluster. Residues 137-370 (RNSIYKSYIN…QNRHSEILDK (234 aa)) enclose the Radical SAM core domain. Residues 373–433 (KKQENKTFKV…KRMVLYGEIV (61 aa)) enclose the TRAM domain.

It belongs to the methylthiotransferase family. MiaB subfamily. In terms of assembly, monomer. The cofactor is [4Fe-4S] cluster.

It localises to the cytoplasm. The enzyme catalyses N(6)-dimethylallyladenosine(37) in tRNA + (sulfur carrier)-SH + AH2 + 2 S-adenosyl-L-methionine = 2-methylsulfanyl-N(6)-dimethylallyladenosine(37) in tRNA + (sulfur carrier)-H + 5'-deoxyadenosine + L-methionine + A + S-adenosyl-L-homocysteine + 2 H(+). Catalyzes the methylthiolation of N6-(dimethylallyl)adenosine (i(6)A), leading to the formation of 2-methylthio-N6-(dimethylallyl)adenosine (ms(2)i(6)A) at position 37 in tRNAs that read codons beginning with uridine. This Campylobacter jejuni subsp. jejuni serotype O:2 (strain ATCC 700819 / NCTC 11168) protein is tRNA-2-methylthio-N(6)-dimethylallyladenosine synthase.